The chain runs to 301 residues: Probable splicing factor ECU05_1440 (301 aa).

The region spanning 1–70 (MQIFIGKIPN…APISVERANG (70 aa)) is the RRM 1 domain. Disordered stretches follow at residues 106-140 (PPMRYESRSPGRYDPRFSDRYGGRSPEYRGDSFRM) and 255-301 (SKDE…AEND). 2 stretches are compositionally biased toward basic and acidic residues: residues 110-140 (YESRSPGRYDPRFSDRYGGRSPEYRGDSFRM) and 255-270 (SKDEYKSRERESHMRS). The RRM 2 domain occupies 182–255 (LKVVFENIAP…HILKTRSYLS (74 aa)).

This sequence belongs to the splicing factor SR family.

The protein resides in the nucleus. Plays a role in splicing. The chain is Probable splicing factor ECU05_1440 from Encephalitozoon cuniculi (strain GB-M1) (Microsporidian parasite).